The chain runs to 444 residues: tRNA-2-methylthio-N(6)-dimethylallyladenosine synthase (444 aa).

One can recognise an MTTase N-terminal domain in the interval 10 to 126 (SSFYIHTFGC…LAGLVAGLRE (117 aa)). [4Fe-4S] cluster contacts are provided by C19, C55, C89, C163, C167, and C170. The 231-residue stretch at 149-379 (RAGSISAFLP…IELQNAISRE (231 aa)) folds into the Radical SAM core domain. The TRAM domain maps to 382–444 (QREIGKTVEV…TSATLSGEAV (63 aa)).

This sequence belongs to the methylthiotransferase family. MiaB subfamily. Monomer. [4Fe-4S] cluster is required as a cofactor.

The protein localises to the cytoplasm. It carries out the reaction N(6)-dimethylallyladenosine(37) in tRNA + (sulfur carrier)-SH + AH2 + 2 S-adenosyl-L-methionine = 2-methylsulfanyl-N(6)-dimethylallyladenosine(37) in tRNA + (sulfur carrier)-H + 5'-deoxyadenosine + L-methionine + A + S-adenosyl-L-homocysteine + 2 H(+). Functionally, catalyzes the methylthiolation of N6-(dimethylallyl)adenosine (i(6)A), leading to the formation of 2-methylthio-N6-(dimethylallyl)adenosine (ms(2)i(6)A) at position 37 in tRNAs that read codons beginning with uridine. This is tRNA-2-methylthio-N(6)-dimethylallyladenosine synthase from Chlorobaculum tepidum (strain ATCC 49652 / DSM 12025 / NBRC 103806 / TLS) (Chlorobium tepidum).